Reading from the N-terminus, the 321-residue chain is WD repeat-containing protein VIP3 (321 aa).

WD repeat units lie at residues 12–55 (AHED…LVRT), 58–97 (GHSLGVAALAAHPSGIIAASSSIDSFVRVFDVDTNATIAV), 100–140 (APPS…LIST), 156–195 (SSKKFVLSVAWSPNGKRLACGSMDGTICVFDVDRSKLLHQ), 198–238 (GHNM…LLGS), 241–280 (GHTSWVLSVDASPDGGAIATGSSDRTVRLWDLKMRAAIQT), and 283–319 (NHNDQVWSVAFRPPGGTGVRAGRLASVSDDKSVSLYD).

Component of the nuclear PAF1 complex (PAF1C), which consists of VIP2/ELF7/PAF1, VIP3/SKI8/WDR61, VIP4/LEO1, VIP5/RTF1, VIP6/ELF8/CTR9 and CDC73. Component of the cytoplasmic SKI complex, which consists of SKI2, SKI3 and VIP3/SKI8. Interacts with VIP4 and VIP6.

It is found in the nucleus. The protein resides in the cytoplasm. Component of the PAF1 complex (PAF1C) which is involved in histone modifications such as methylation on histone H3 'Lys-4' (H3K4me3). Involved in regulation of flowering time. Required for the expression of the flowering repressor and MADS box gene FLC. Required for histone H3 trimethylation on 'Lys-4' (H3K4me3) and histone dimethylation on 'Lys-36' (H3K36me2) at the FLC locus. Prevents trimethylation on 'Lys-27' (H3K27me3) at the same locus. Not required for meiotic recombination or progression. Component of the SKI complex which is thought to be involved in exosome-mediated RNA decay and associates with transcriptionally active genes in a manner dependent on PAF1 complex (PAF1C). Required for proper progression of cell differentiation process. This chain is WD repeat-containing protein VIP3, found in Arabidopsis thaliana (Mouse-ear cress).